A 258-amino-acid polypeptide reads, in one-letter code: Small ribosomal subunit protein uS15m (258 aa).

A mitochondrion-targeting transit peptide spans 1–57; the sequence is MLRAAWRALSSVRAQAVTRAPVPALRGGSSASLLSARCGLQPPSLLRAARAYAAVQK. Residues 229-258 are disordered; the sequence is KAAAAAAKKEKNEGVPENPSNAVPEKTQVN.

This sequence belongs to the universal ribosomal protein uS15 family. As to quaternary structure, component of the mitochondrial ribosome small subunit (28S) which comprises a 12S rRNA and about 30 distinct proteins. Interacts with METTL17.

The protein localises to the mitochondrion matrix. The sequence is that of Small ribosomal subunit protein uS15m (Mrps15) from Mus musculus (Mouse).